Here is a 264-residue protein sequence, read N- to C-terminus: Thymidylate synthase (264 aa).

Arginine 21 lines the dUMP pocket. Histidine 51 serves as a coordination point for (6R)-5,10-methylene-5,6,7,8-tetrahydrofolate. 126–127 (RR) contacts dUMP. The active-site Nucleophile is cysteine 146. Residues 166-169 (RSCD), asparagine 177, and 207-209 (HLY) each bind dUMP. Aspartate 169 is a (6R)-5,10-methylene-5,6,7,8-tetrahydrofolate binding site. (6R)-5,10-methylene-5,6,7,8-tetrahydrofolate is bound at residue alanine 263.

This sequence belongs to the thymidylate synthase family. Bacterial-type ThyA subfamily. Homodimer.

The protein localises to the cytoplasm. The enzyme catalyses dUMP + (6R)-5,10-methylene-5,6,7,8-tetrahydrofolate = 7,8-dihydrofolate + dTMP. It functions in the pathway pyrimidine metabolism; dTTP biosynthesis. Catalyzes the reductive methylation of 2'-deoxyuridine-5'-monophosphate (dUMP) to 2'-deoxythymidine-5'-monophosphate (dTMP) while utilizing 5,10-methylenetetrahydrofolate (mTHF) as the methyl donor and reductant in the reaction, yielding dihydrofolate (DHF) as a by-product. This enzymatic reaction provides an intracellular de novo source of dTMP, an essential precursor for DNA biosynthesis. This is Thymidylate synthase from Photorhabdus laumondii subsp. laumondii (strain DSM 15139 / CIP 105565 / TT01) (Photorhabdus luminescens subsp. laumondii).